Here is a 233-residue protein sequence, read N- to C-terminus: MAKITKRMRVIRDKVDATKSYDINEAVVLLKELATAKFVESVDVAINLGIDARKSDQNVRGATVLPHGTGRDIRVAVFTQGANAEAAKEAGADLIGMDDLADQVKKGIMDFDVVIASPDAMRVVGQLGTILGPRGLMPNPKVGTVTPNVAQAVKNAKAGQVRYRNDKNGIIHTTIGKVDFDAAQLKENLESLLVALKKSKPSSAKGIFIKKISISTTMGAGVSLDQGTLEASI.

Belongs to the universal ribosomal protein uL1 family. Part of the 50S ribosomal subunit.

Binds directly to 23S rRNA. The L1 stalk is quite mobile in the ribosome, and is involved in E site tRNA release. Its function is as follows. Protein L1 is also a translational repressor protein, it controls the translation of the L11 operon by binding to its mRNA. The chain is Large ribosomal subunit protein uL1 from Photobacterium profundum (strain SS9).